The primary structure comprises 373 residues: Transmembrane protein adipocyte-associated 1 (373 aa).

Asn11 and Asn23 each carry an N-linked (GlcNAc...) asparagine glycan. A run of 7 helical transmembrane segments spans residues 48 to 68 (LLLL…LPSA), 76 to 96 (SSPI…VGIA), 123 to 143 (FFLL…GHLE), 151 to 171 (VLAI…TLEI), 192 to 212 (QFWL…VILP), 234 to 254 (ILAL…FDII), and 265 to 285 (FLYF…GFFG). Asn361 carries N-linked (GlcNAc...) asparagine glycosylation.

The protein belongs to the UPF0359 family. As to expression, ubiquitous, with higher levels in heart, placenta and kidney.

It localises to the membrane. The protein is Transmembrane protein adipocyte-associated 1 (TPRA1) of Homo sapiens (Human).